Consider the following 891-residue polypeptide: Extended synaptotagmin-3 (891 aa).

A disordered region spans residues 1–30 (MQPEEPCAPSAPGGPDVPERGQRSRDPGPR). The Cytoplasmic segment spans residues 1–32 (MQPEEPCAPSAPGGPDVPERGQRSRDPGPRLS). A compositionally biased stretch (basic and acidic residues) spans 17-28 (VPERGQRSRDPG). A helical transmembrane segment spans residues 33–53 (GQLLPELYSFVARVLFYLAPV). Y54 is a topological domain (lumenal). The chain crosses the membrane as a helical span at residues 55–75 (LAGYLGLSVTWLLLGALLWMW). Topologically, residues 76-891 (WRRNRRGKLG…ELTADGQPRS (816 aa)) are cytoplasmic. Residues 118–295 (DVERVEWANK…LPNRVTVPVK (178 aa)) form the SMP-LTD domain. 2 consecutive C2 domains span residues 292-412 (VPVK…DEWF) and 430-570 (SLLT…QLDH). Ca(2+)-binding residues include K325, D326, D336, D383, E384, D385, D387, D389, and D390. Residues 652–711 (SAATTDPEPMPEPQGPGPEPKGKDSARGLCESPGKKKNPATTFLTVPGLHSPGPIKSPRP) form a disordered region. Residues 659–670 (EPMPEPQGPGPE) show a composition bias toward pro residues. In terms of domain architecture, C2 3 spans 759 to 881 (RLGEIQLTVR…DLIKGFSQWY (123 aa)). The tract at residues 806–813 (RRWASRKK) is required for phosphatidylinositol 4,5-bisphosphate-dependent location at the cell membrane.

It belongs to the extended synaptotagmin family.

The protein localises to the cell membrane. It localises to the endoplasmic reticulum membrane. Its function is as follows. Tethers the endoplasmic reticulum to the cell membrane and promotes the formation of appositions between the endoplasmic reticulum and the cell membrane. Binds glycerophospholipids in a barrel-like domain and may play a role in cellular lipid transport. This chain is Extended synaptotagmin-3 (Esyt3), found in Mus musculus (Mouse).